The sequence spans 461 residues: Cysteine--tRNA ligase (461 aa).

Cys-28 is a Zn(2+) binding site. The 'HIGH' region signature appears at 30–40 (ITIYDLCHIGH). Cys-209, His-234, and Glu-238 together coordinate Zn(2+). Positions 266 to 270 (KMSKS) match the 'KMSKS' region motif. Lys-269 contributes to the ATP binding site.

It belongs to the class-I aminoacyl-tRNA synthetase family. As to quaternary structure, monomer. Zn(2+) serves as cofactor.

It localises to the cytoplasm. The catalysed reaction is tRNA(Cys) + L-cysteine + ATP = L-cysteinyl-tRNA(Cys) + AMP + diphosphate. This is Cysteine--tRNA ligase from Yersinia pseudotuberculosis serotype IB (strain PB1/+).